The chain runs to 402 residues: MTDDLTGALTQPPLGRTVRAVADRELGTHLLETRGIHWIHAANGDPYATVLRGQADDPYPAYERVRARGALSFSPTGSWVTADHALAASILCSTDFGVSGADGVPVPQQVLSYGEGCPLEREQVLPAAGDVPEGGQRAVVEGIHRETLEGLAPDPSASYAFELLGGFVRPAVTAAAAAVLGVPADRRADFADLLERLRPLSDSLLAPQSLRTVRAADGALAELTALLADSDDSPGALLSALGVTAAVQLTGNAVLALLAHPEQWRELCDRPGLAAAAVEETLRYDPPVQLDARVVRGETELAGRRLPAGAHVVVLTAATGRDPEVFTDPERFDLARPDAAAHLALHPAGPYGPVASLVRLQAEVALRTLAGRFPGLRQAGDVLRPRRAPVGRGPLSVPVSSS.

This sequence belongs to the cytochrome P450 family. In terms of assembly, forms a complex with DesVII.

Its pathway is antibiotic biosynthesis. In terms of biological role, involved in the biosynthesis of the macrolide antibiotics methymycin, neomethymycin, narbomycin, and pikromycin. DesVIII assists the folding of the DesVII polypeptide. However, unlike chaperones, it remains bound to DesVII during catalysis, forming a tight DesVII/DesVIII complex. Although the formation of the DesVII/DesVIII complex is essential for the catalytic activity, DesVIII is unlikely to be involved in catalysis directly. This Streptomyces venezuelae protein is Protein DesVIII.